Here is a 93-residue protein sequence, read N- to C-terminus: DNA/RNA-binding protein Alba (93 aa).

Lys-11 is modified (N6-acetyllysine).

The protein belongs to the histone-like Alba family. Acetylated. Acetylation at Lys-11 decreases DNA-binding affinity.

The protein localises to the cytoplasm. The protein resides in the chromosome. Functionally, binds double-stranded DNA tightly but without sequence specificity. Involved in DNA compaction. This is DNA/RNA-binding protein Alba from Pyrococcus abyssi (strain GE5 / Orsay).